The following is a 274-amino-acid chain: MSTYFISDIHGCYEEFRILLEKSSFNDKKDYLWIAGDLVSRGPDSLKVVKYLYSLKDRVQIVLGNHDINLIAVHAGIKDNKKENYFDEFLSSPDSVELINWLRCQSFLKVDEKRKIIMSHAGISPQWDINIAKVCALEIEDRLSHKNYALFLKEIYHNNIDFWRLNLNQLDRLRYSMNSFTRMRYCYPDGRLNMFCKKSPDFVKYPLRPWFLMPSSISKVYSIFFGHWSSLKGTHVPKPFFPLDAGCCWGEELVMLRWEDGKWFSQAYLSKKCI.

It belongs to the Ap4A hydrolase family.

It carries out the reaction P(1),P(4)-bis(5'-adenosyl) tetraphosphate + H2O = 2 ADP + 2 H(+). Functionally, hydrolyzes diadenosine 5',5'''-P1,P4-tetraphosphate to yield ADP. The protein is Bis(5'-nucleosyl)-tetraphosphatase, symmetrical (apaH) of Buchnera aphidicola subsp. Acyrthosiphon pisum (strain APS) (Acyrthosiphon pisum symbiotic bacterium).